The following is a 440-amino-acid chain: Trigger factor (440 aa).

One can recognise a PPIase FKBP-type domain in the interval 161–257; sequence GDYVKLAYEG…VLEVRERVLP (97 aa).

Belongs to the FKBP-type PPIase family. Tig subfamily.

It localises to the cytoplasm. The catalysed reaction is [protein]-peptidylproline (omega=180) = [protein]-peptidylproline (omega=0). Its function is as follows. Involved in protein export. Acts as a chaperone by maintaining the newly synthesized protein in an open conformation. Functions as a peptidyl-prolyl cis-trans isomerase. This is Trigger factor from Opitutus terrae (strain DSM 11246 / JCM 15787 / PB90-1).